The primary structure comprises 396 residues: 1-deoxy-D-xylulose 5-phosphate reductoisomerase (396 aa).

Positions 13, 14, 15, 16, and 127 each coordinate NADPH. K128 is a binding site for 1-deoxy-D-xylulose 5-phosphate. E129 is an NADPH binding site. D153 provides a ligand contact to Mn(2+). Residues S154, E155, S184, and H207 each coordinate 1-deoxy-D-xylulose 5-phosphate. E155 is a binding site for Mn(2+). G213 is a binding site for NADPH. S220, N225, K226, and E229 together coordinate 1-deoxy-D-xylulose 5-phosphate. E229 contributes to the Mn(2+) binding site.

Belongs to the DXR family. Mg(2+) is required as a cofactor. It depends on Mn(2+) as a cofactor.

The enzyme catalyses 2-C-methyl-D-erythritol 4-phosphate + NADP(+) = 1-deoxy-D-xylulose 5-phosphate + NADPH + H(+). It functions in the pathway isoprenoid biosynthesis; isopentenyl diphosphate biosynthesis via DXP pathway; isopentenyl diphosphate from 1-deoxy-D-xylulose 5-phosphate: step 1/6. Catalyzes the NADPH-dependent rearrangement and reduction of 1-deoxy-D-xylulose-5-phosphate (DXP) to 2-C-methyl-D-erythritol 4-phosphate (MEP). This chain is 1-deoxy-D-xylulose 5-phosphate reductoisomerase, found in Pseudomonas aeruginosa (strain UCBPP-PA14).